The primary structure comprises 471 residues: Eremophilane O-acetyltransferase prx11 (471 aa).

The protein belongs to the fumigaclavine B O-acetyltransferase family. In terms of assembly, monomer.

The protein operates within sesquiterpene biosynthesis. In terms of biological role, O-acetyltransferase; part of the gene cluster that mediates the biosynthesis of PR-toxin, a bicyclic sesquiterpene belonging to the eremophilane class and acting as a mycotoxin. The first step of the pathway is catalyzed by the aristolochene synthase which performs the cyclization of trans,trans-farnesyl diphosphate (FPP) to the bicyclic sesquiterpene aristolochene. Following the formation of aristolochene, the non-oxygenated aristolochene is converted to the trioxygenated intermediate eremofortin B, via 7-epi-neopetasone. This conversion appears to involve three enzymes, a hydroxysterol oxidase-like enzyme, the quinone-oxidase prx3 that forms the quinone-type-structure in the bicyclic nucleus of aristolochene with the C8-oxo group and the C-3 hydroxyl group, and the P450 monooxygenase prx9 that introduces the epoxide at the double bond between carbons 1 and 2. No monoxy or dioxy-intermediates have been reported to be released to the broth, so these three early oxidative reactions may be coupled together. Eremofortin B is further oxidized by another P450 monooxygenase, that introduces a second epoxide between carbons 7 and 11 prior to acetylation to eremofortin A by the acetyltransferase prx11. The second epoxidation may be performed by a second P450 monooxygenase. After the acetylation step, eremofortin A is converted to eremofortin C and then to PR-toxin. First the conversion of eremofortin A to eremofortin C proceeds by oxidation of the side chain of the molecule at C-12 and is catalyzed by the short-chain oxidoreductase prx1. The cytochrome P450 monooxygenase prx8 also plays a role in this step. The primary alcohol formed at C-12 is finally oxidized by the short-chain alcohol dehydrogenase prx4 that forms PR-toxin. The sequence is that of Eremophilane O-acetyltransferase prx11 from Penicillium rubens (strain ATCC 28089 / DSM 1075 / NRRL 1951 / Wisconsin 54-1255) (Penicillium chrysogenum).